Reading from the N-terminus, the 101-residue chain is Small ribosomal subunit protein uS14 (101 aa).

This sequence belongs to the universal ribosomal protein uS14 family. In terms of assembly, part of the 30S ribosomal subunit. Contacts proteins S3 and S10.

In terms of biological role, binds 16S rRNA, required for the assembly of 30S particles and may also be responsible for determining the conformation of the 16S rRNA at the A site. The sequence is that of Small ribosomal subunit protein uS14 from Caulobacter vibrioides (strain ATCC 19089 / CIP 103742 / CB 15) (Caulobacter crescentus).